The chain runs to 140 residues: Putative pre-16S rRNA nuclease (140 aa).

Belongs to the YqgF nuclease family.

It localises to the cytoplasm. In terms of biological role, could be a nuclease involved in processing of the 5'-end of pre-16S rRNA. The protein is Putative pre-16S rRNA nuclease of Enterococcus faecalis (strain ATCC 700802 / V583).